Here is a 302-residue protein sequence, read N- to C-terminus: Stanniocalcin-2 (302 aa).

Positions 1–24 (MCAERLGQFMTLALVLATFDPARG) are cleaved as a signal peptide. Residues 23-44 (RGTDATNPPEGPQDRSPQQKGR) form a disordered region. Residues Asn73 and Asn74 are each glycosylated (N-linked (GlcNAc...) asparagine). The tract at residues 217 to 302 (RPPTAPPERQ…EQSEYSDIRR (86 aa)) is disordered. The segment covering 227-264 (PQVDRTKLSRAHHGEAGHHLPEPSSRETGRGAKGERGS) has biased composition (basic and acidic residues). A phosphoserine mark is found at Ser250 and Ser251. Thr254 carries the phosphothreonine modification.

The protein belongs to the stanniocalcin family. As to quaternary structure, homodimer; disulfide-linked.

Its subcellular location is the secreted. In terms of biological role, has an anti-hypocalcemic action on calcium and phosphate homeostasis. The protein is Stanniocalcin-2 (STC2) of Pongo abelii (Sumatran orangutan).